We begin with the raw amino-acid sequence, 397 residues long: 2-isopropylmalate synthase 1 (397 aa).

The region spanning Val-6–Tyr-268 is the Pyruvate carboxyltransferase domain. Positions 15, 203, 205, and 239 each coordinate Mn(2+).

This sequence belongs to the alpha-IPM synthase/homocitrate synthase family. LeuA type 1 subfamily. In terms of assembly, homodimer. It depends on Mn(2+) as a cofactor.

It is found in the cytoplasm. It catalyses the reaction 3-methyl-2-oxobutanoate + acetyl-CoA + H2O = (2S)-2-isopropylmalate + CoA + H(+). It participates in amino-acid biosynthesis; L-leucine biosynthesis; L-leucine from 3-methyl-2-oxobutanoate: step 1/4. Catalyzes the condensation of the acetyl group of acetyl-CoA with 3-methyl-2-oxobutanoate (2-ketoisovalerate) to form 3-carboxy-3-hydroxy-4-methylpentanoate (2-isopropylmalate). This chain is 2-isopropylmalate synthase 1, found in Caldanaerobacter subterraneus subsp. tengcongensis (strain DSM 15242 / JCM 11007 / NBRC 100824 / MB4) (Thermoanaerobacter tengcongensis).